The chain runs to 168 residues: Coiled-coil domain-containing protein 200 (168 aa).

Positions 16–50 (LDRRRWLMAQQQQELQQKEQELKNHQEEEQQSEEK) form a coiled coil. Residues 23–168 (MAQQQQELQQ…LKSTNYIQQW (146 aa)) form a disordered region. Residues 31 to 52 (QQKEQELKNHQEEEQQSEEKLQ) are compositionally biased toward basic and acidic residues. Residues 70 to 82 (SQEQPQPSQQQPS) are compositionally biased toward low complexity. Composition is skewed to pro residues over residues 83 to 94 (VQPPSQPPPQPS) and 104 to 117 (GPQP…PQPT). 2 stretches are compositionally biased toward polar residues: residues 124 to 138 (RCTQ…QDSQ) and 145 to 168 (PCQS…IQQW).

This chain is Coiled-coil domain-containing protein 200, found in Homo sapiens (Human).